A 339-amino-acid chain; its full sequence is Silicatein (339 aa).

A signal peptide spans 1–18; sequence MAIVYGAILFQIILIACA. A propeptide spanning residues 19–122 is cleaved from the precursor; that stretch reads EFPPEWHAWK…REYQAPATVS (104 aa). L123 bears the N,N-dimethylleucine; alternate mark. An N-methylleucine; alternate modification is found at L123. S188 bears the Phosphoserine mark. Residue Y219 is modified to Phosphotyrosine. Residues H286 and N306 contribute to the active site. The residue at position 335 (S335) is a Phosphoserine.

This sequence belongs to the peptidase C1 family. In terms of assembly, homodimer. Homodimerization occurs as a result of non-covalent interactions and not through disulfide linkages between the two monomers.

Polymerizes silica around the axial filament during spicule formation. This is Silicatein from Petrosia ficiformis (Common Mediterranean sponge).